The sequence spans 396 residues: Putative cytochrome P450 YjiB (396 aa).

Cys-349 lines the heme pocket.

This sequence belongs to the cytochrome P450 family. Heme serves as cofactor.

This is Putative cytochrome P450 YjiB (yjiB) from Bacillus subtilis (strain 168).